The primary structure comprises 126 residues: Large-conductance mechanosensitive channel (126 aa).

2 consecutive transmembrane segments (helical) span residues 17-37 and 70-90; these read VDLAVGVIIGAAFGKIVSSFI and GLFLSAVINFIIVAFVLFLII.

The protein belongs to the MscL family. In terms of assembly, homopentamer.

It is found in the cell inner membrane. In terms of biological role, channel that opens in response to stretch forces in the membrane lipid bilayer. May participate in the regulation of osmotic pressure changes within the cell. This chain is Large-conductance mechanosensitive channel, found in Flavobacterium johnsoniae (strain ATCC 17061 / DSM 2064 / JCM 8514 / BCRC 14874 / CCUG 350202 / NBRC 14942 / NCIMB 11054 / UW101) (Cytophaga johnsonae).